Here is a 126-residue protein sequence, read N- to C-terminus: Holo-[acyl-carrier-protein] synthase (126 aa).

Residues Asp9 and Glu58 each coordinate Mg(2+).

It belongs to the P-Pant transferase superfamily. AcpS family. Mg(2+) serves as cofactor.

It is found in the cytoplasm. The catalysed reaction is apo-[ACP] + CoA = holo-[ACP] + adenosine 3',5'-bisphosphate + H(+). Its function is as follows. Transfers the 4'-phosphopantetheine moiety from coenzyme A to a Ser of acyl-carrier-protein. The protein is Holo-[acyl-carrier-protein] synthase of Vibrio parahaemolyticus serotype O3:K6 (strain RIMD 2210633).